We begin with the raw amino-acid sequence, 250 residues long: Proteasome subunit alpha type-4-2 (250 aa).

As to quaternary structure, the 26S proteasome consists of a 20S proteasome core and two 19S regulatory subunits. The 20S proteasome core is composed of 28 subunits that are arranged in four stacked rings, resulting in a barrel-shaped structure. The two end rings are each formed by seven alpha subunits, and the two central rings are each formed by seven beta subunits. The catalytic chamber with the active sites is on the inside of the barrel.

The protein localises to the cytoplasm. The protein resides in the nucleus. The proteasome is a multicatalytic proteinase complex which is characterized by its ability to cleave peptides with Arg, Phe, Tyr, Leu, and Glu adjacent to the leaving group at neutral or slightly basic pH. The proteasome has an ATP-dependent proteolytic activity. The chain is Proteasome subunit alpha type-4-2 from Oryza sativa subsp. indica (Rice).